Reading from the N-terminus, the 261-residue chain is Follistatin-related protein 3 (261 aa).

Positions 1–26 are cleaved as a signal peptide; sequence MRPRAPGPLWPLPWGALAWAVGFVGS. The TB domain maps to 36 to 107; sequence GVCWLQQGRE…SCEGVECGPG (72 aa). 8 disulfide bridges follow: cysteine 38–cysteine 61, cysteine 48–cysteine 92, cysteine 62–cysteine 95, cysteine 99–cysteine 110, cysteine 104–cysteine 119, cysteine 121–cysteine 153, cysteine 125–cysteine 146, and cysteine 135–cysteine 167. Asparagine 73 is a glycosylation site (N-linked (GlcNAc...) asparagine). The Follistatin-like 1 domain occupies 99–119; that stretch reads CEGVECGPGKACRMLGGRPRC. Kazal-like domains follow at residues 113 to 169 and 189 to 245; these read LGGR…RCRK and SAHC…SCAG. The Follistatin-like 2 domain occupies 170 to 193; it reads SCAHVVCLRPQSCVVDQTGSAHCV. 3 disulfide bridges follow: cysteine 195–cysteine 229, cysteine 200–cysteine 222, and cysteine 211–cysteine 243. The N-linked (GlcNAc...) asparagine glycan is linked to asparagine 215. Positions 242-261 are disordered; that stretch reads SCAGTPEPLDPESEEEENFV. The segment covering 250–261 has biased composition (acidic residues); it reads LDPESEEEENFV.

As to quaternary structure, interacts with INHBA and INHBB. Interacts with FN1. Interacts with ADAM12. Interacts with MLLT10; the interaction enhances MLLT10 in vitro transcriptional activity and self-association. Interacts with MSTN.

It localises to the secreted. The protein localises to the nucleus. Functionally, the secreted form is a binding and antagonizing protein for members of the TGF-beta family, such as activin, BMP2 and MSTN. Inhibits activin A-, activin B-, BMP2- and MSDT-induced cellular signaling; more effective on activin A than on activin B. Involved in bone formation; inhibits osteoclast differentiation. Involved in hematopoiesis; involved in differentiation of hemopoietic progenitor cells, increases hematopoietic cell adhesion to fibronectin and seems to contribute to the adhesion of hematopoietic precursor cells to the bone marrow stroma. The nuclear form is probably involved in transcriptional regulation via interaction with MLLT10. The polypeptide is Follistatin-related protein 3 (FSTL3) (Bos taurus (Bovine)).